Reading from the N-terminus, the 218-residue chain is Ribulose-phosphate 3-epimerase (218 aa).

A substrate-binding site is contributed by S10. 3 residues coordinate a divalent metal cation: H35, D37, and H68. The active-site Proton acceptor is D37. Substrate-binding positions include H68, 144–147 (GFSG), 177–179 (DGG), and 199–200 (GS). D177 contacts a divalent metal cation. D177 functions as the Proton donor in the catalytic mechanism.

This sequence belongs to the ribulose-phosphate 3-epimerase family. A divalent metal cation is required as a cofactor.

It catalyses the reaction D-ribulose 5-phosphate = D-xylulose 5-phosphate. It participates in carbohydrate degradation. In terms of biological role, catalyzes the reversible epimerization of D-ribulose 5-phosphate to D-xylulose 5-phosphate. This chain is Ribulose-phosphate 3-epimerase, found in Treponema pallidum (strain Nichols).